Here is a 108-residue protein sequence, read N- to C-terminus: Peptidyl-prolyl cis-trans isomerase FKBP1B (108 aa).

The region spanning 20-108 (GQICVVHYTG…IFDVELLSLE (89 aa)) is the PPIase FKBP-type domain.

It belongs to the FKBP-type PPIase family. FKBP1 subfamily. As to quaternary structure, identified in a complex composed of RYR2, FKBP1B, PKA catalytic subunit, PRKAR2A, AKAP6, and the protein phosphatases PP2A and PP1. Interacts directly with RYR2.

Its subcellular location is the cytoplasm. The protein resides in the sarcoplasmic reticulum. It carries out the reaction [protein]-peptidylproline (omega=180) = [protein]-peptidylproline (omega=0). Inhibited by both FK506 and rapamycin. Functionally, has the potential to contribute to the immunosuppressive and toxic effects of FK506 and rapamycin. PPIases accelerate the folding of proteins. It catalyzes the cis-trans isomerization of proline imidic peptide bonds in oligopeptides. The protein is Peptidyl-prolyl cis-trans isomerase FKBP1B (Fkbp1b) of Mus musculus (Mouse).